Consider the following 318-residue polypeptide: MSQPLNSNPEVLLRKRRNADRTRLEKQELAKKRKEQEEKQKRSKKNRFVRAETIVATTLATEREKTRIRRVRDLENQKVKNDLSHIPSDRDFILRISEREAGSKATSESELQDVDEEDEEDDGLIREKIVYDGEPSLLFVIRVKGPTAVKIPAKAYKVLSLLRLVELNTGVFIKLTKDVYPLLKLVSPYIVIGQPSLASIRSLIQKRSRIMWQRPEDKEPKEIILNDNNIVEEKLGDEGVICIEDIIHEISTLGENFSKCTFFLLPFKLNREVSGFGAISRLNKLKMREQNKKTRQISNAATAPVIQVDIDSMISKLN.

Disordered stretches follow at residues 1 to 49 (MSQP…NRFV) and 101 to 121 (AGSK…DEED). The span at 19–40 (ADRTRLEKQELAKKRKEQEEKQ) shows a compositional bias: basic and acidic residues. The segment covering 110 to 121 (ELQDVDEEDEED) has biased composition (acidic residues).

Belongs to the universal ribosomal protein uL30 family.

It localises to the nucleus. Its subcellular location is the nucleolus. Involved in the biogenesis of the 60S ribosomal subunit. May act as a specificity factor that binds precursor rRNAs and tethers the enzymes that carry out the early 5' to 3' exonucleolytic reactions that generate the mature rRNAs. This chain is Ribosome biogenesis protein RLP7 (RLP7), found in Kluyveromyces lactis (strain ATCC 8585 / CBS 2359 / DSM 70799 / NBRC 1267 / NRRL Y-1140 / WM37) (Yeast).